A 530-amino-acid chain; its full sequence is Polyprotein pp62 (530 aa).

This sequence belongs to the asfivirus polyprotein pp62 family. As to quaternary structure, monomer. Predominantly exists as a monomer, with very little dimers. Homodimerization seems to be linked to low pH. Homodimer; disulfide-linked. Homotrimer; disulfide-linked. Homohexamer. Monoubiquitinated in vitro by viral UBCv1. Post-translationally, specific enzymatic cleavages in vivo yield mature proteins.

Its subcellular location is the host cytoplasm. It is found in the host perinuclear region. The protein resides in the virion. In terms of biological role, essential for the correct assembly and maturation of the core of the virion. Functionally, component of the core shell. Binds to phosphatidylserine, which may enable the core shell binding with the inner membrane. Component of the core shell. Binds to phosphatidylserine and DNA, which may link the core shell to the inner membrane and to the viral nucleoid. Its function is as follows. Component of the core shell. In Ornithodoros (relapsing fever ticks), this protein is Polyprotein pp62.